A 354-amino-acid chain; its full sequence is NADH-quinone oxidoreductase subunit H (354 aa).

8 helical membrane passes run 25 to 45 (LVRI…LILW), 91 to 111 (WLYL…WAVI), 126 to 146 (LLYA…AGWA), 170 to 190 (MGFA…SEIV), 205 to 225 (FLSW…ISGI), 253 to 273 (MAFA…SALA), 290 to 310 (FIPG…VFIW), and 330 to 350 (VFLP…MSPL).

Belongs to the complex I subunit 1 family. In terms of assembly, NDH-1 is composed of 14 different subunits. Subunits NuoA, H, J, K, L, M, N constitute the membrane sector of the complex.

It is found in the cell inner membrane. It catalyses the reaction a quinone + NADH + 5 H(+)(in) = a quinol + NAD(+) + 4 H(+)(out). Its function is as follows. NDH-1 shuttles electrons from NADH, via FMN and iron-sulfur (Fe-S) centers, to quinones in the respiratory chain. The immediate electron acceptor for the enzyme in this species is believed to be ubiquinone. Couples the redox reaction to proton translocation (for every two electrons transferred, four hydrogen ions are translocated across the cytoplasmic membrane), and thus conserves the redox energy in a proton gradient. This subunit may bind ubiquinone. The polypeptide is NADH-quinone oxidoreductase subunit H (Burkholderia mallei (strain ATCC 23344)).